Here is an 88-residue protein sequence, read N- to C-terminus: Homeobox protein knotted-1-like 11 (88 aa).

Residues 4–24 form the ELK domain; that stretch reads ELKEMLLKKYSGCLSRLRSEF. Residues 25 to 88 constitute a DNA-binding region (homeobox; TALE-type); sequence LKKRKKGKLP…NQRKRHWKPS (64 aa).

This sequence belongs to the TALE/KNOX homeobox family.

The protein resides in the nucleus. Functionally, probably binds to the DNA sequence 5'-TGAC-3'. The sequence is that of Homeobox protein knotted-1-like 11 (KNOX11) from Zea mays (Maize).